A 235-amino-acid chain; its full sequence is Glial cell line-derived neurotrophic factor (235 aa).

Positions 1–19 (MKLWDILATCLLLLSSVST) are cleaved as a signal peptide. Positions 20-87 (RPLFHKLQPS…DFIEATLGRL (68 aa)) are excised as a propeptide. Disordered stretches follow at residues 34–60 (VRSE…ASME) and 91–137 (SDVE…RVKG). The segment covering 119–128 (GERKRSRGRA) has biased composition (basic residues). 3 disulfides stabilise this stretch: C142-C203, C169-C232, and C173-C234. N-linked (GlcNAc...) asparagine glycosylation is found at N150 and N186.

The protein belongs to the TGF-beta family. GDNF subfamily. Homodimer; disulfide-linked. Interacts with GFRA1 coreceptor and RET: forms a 2:2:2 ternary complex composed of GDNF ligand, GFRA1 and RET receptor. As to expression, first expressed at 14 hours post-fertilization (hpf) in the ventral half of anterior somites and in intermediate mesoderm. Ventral somitic expression persists and extends more posteriorly over the next 12 hours. Expressed throughout the ventral trunk mesoderm and endoderm at 24 hpf. By 30 hpf, somitic expression ceases and by 36 hpf, expression becomes restricted to the endodermal cells forming the gut, with expression along the whole length of the developing gut tube at 72 hpf.

Its subcellular location is the secreted. In terms of biological role, neurotrophic factor that enhances survival and morphological differentiation of dopaminergic neurons and increases their high-affinity dopamine uptake. Acts by binding to its coreceptor, GFRA1, leading to autophosphorylation and activation of the RET receptor. In Danio rerio (Zebrafish), this protein is Glial cell line-derived neurotrophic factor.